Consider the following 367-residue polypeptide: Anhydro-N-acetylmuramic acid kinase (367 aa).

Gly-11 to Asp-18 contacts ATP.

Belongs to the anhydro-N-acetylmuramic acid kinase family.

The enzyme catalyses 1,6-anhydro-N-acetyl-beta-muramate + ATP + H2O = N-acetyl-D-muramate 6-phosphate + ADP + H(+). It functions in the pathway amino-sugar metabolism; 1,6-anhydro-N-acetylmuramate degradation. The protein operates within cell wall biogenesis; peptidoglycan recycling. Its function is as follows. Catalyzes the specific phosphorylation of 1,6-anhydro-N-acetylmuramic acid (anhMurNAc) with the simultaneous cleavage of the 1,6-anhydro ring, generating MurNAc-6-P. Is required for the utilization of anhMurNAc either imported from the medium or derived from its own cell wall murein, and thus plays a role in cell wall recycling. This Bradyrhizobium diazoefficiens (strain JCM 10833 / BCRC 13528 / IAM 13628 / NBRC 14792 / USDA 110) protein is Anhydro-N-acetylmuramic acid kinase.